A 552-amino-acid polypeptide reads, in one-letter code: Hydroxylamine reductase (552 aa).

Cys5, Cys8, Cys20, and Cys27 together coordinate [2Fe-2S] cluster. Positions 251, 275, 319, 407, 435, 460, 494, and 496 each coordinate hybrid [4Fe-2O-2S] cluster. Cys407 is modified (cysteine persulfide).

The protein belongs to the HCP family. [2Fe-2S] cluster serves as cofactor. Hybrid [4Fe-2O-2S] cluster is required as a cofactor.

Its subcellular location is the cytoplasm. The enzyme catalyses A + NH4(+) + H2O = hydroxylamine + AH2 + H(+). Functionally, catalyzes the reduction of hydroxylamine to form NH(3) and H(2)O. This Shigella sonnei (strain Ss046) protein is Hydroxylamine reductase.